Here is an 891-residue protein sequence, read N- to C-terminus: Valine--tRNA ligase (891 aa).

Residues 43–53 carry the 'HIGH' region motif; sequence PFTSGTLHLGH. Positions 536–540 match the 'KMSKS' region motif; that stretch reads KMSKS. Residue K539 participates in ATP binding.

The protein belongs to the class-I aminoacyl-tRNA synthetase family. ValS type 2 subfamily.

The protein localises to the cytoplasm. The catalysed reaction is tRNA(Val) + L-valine + ATP = L-valyl-tRNA(Val) + AMP + diphosphate. In terms of biological role, catalyzes the attachment of valine to tRNA(Val). As ValRS can inadvertently accommodate and process structurally similar amino acids such as threonine, to avoid such errors, it has a 'posttransfer' editing activity that hydrolyzes mischarged Thr-tRNA(Val) in a tRNA-dependent manner. This Pyrococcus furiosus (strain ATCC 43587 / DSM 3638 / JCM 8422 / Vc1) protein is Valine--tRNA ligase.